The primary structure comprises 357 residues: Protein phosphatase 1 regulatory subunit 42 (357 aa).

7 LRR repeats span residues 29 to 50 (KITH…SLCR), 51 to 72 (NLSV…NYTT), 73 to 94 (NLTH…SSLK), 95 to 116 (KLEK…EGLE), 117 to 138 (ELRE…LFDP), 147 to 168 (SLST…EILE), and 169 to 190 (NLNH…ELLL). Residues 204–242 (NPVCLKPKYRDKLILTSKSLEFLDGKEIKDMERQFLMNW) enclose the LRRCT domain. The tract at residues 329-357 (ESSLTKNDIHEPHLLQNPKVKENLSEKKE) is disordered. Residues 335 to 357 (NDIHEPHLLQNPKVKENLSEKKE) show a composition bias toward basic and acidic residues.

As to quaternary structure, interacts with PPP1CC isoform gamma-2; the interaction is direct. Interacts with actin, dynein, KIF5B, KIFC1 and tubulin. Associates with microtubules. Post-translationally, phosphorylated; during the first round of spermatogenesis with a marginal increase at 21 days after birth. As to expression, testis-specific. Expressed in spermatids (at protein level). Testis-specific.

Its subcellular location is the cytoplasm. It localises to the cytoskeleton. It is found in the microtubule organizing center. The protein resides in the centrosome. Its function is as follows. Regulates phosphatase activity of protein phosphatase 1 (PP1) complexes in the testis. The polypeptide is Protein phosphatase 1 regulatory subunit 42 (Ppp1r42) (Mus musculus (Mouse)).